Reading from the N-terminus, the 213-residue chain is Orotidine 5'-phosphate decarboxylase (213 aa).

Residues aspartate 11, lysine 33, 61-70 (DLKLADIPNT), serine 113, 166-176 (PGVGAQGGKAS), glycine 189, and arginine 190 contribute to the substrate site. Residue lysine 63 is the Proton donor of the active site.

Belongs to the OMP decarboxylase family. Type 1 subfamily. In terms of assembly, homodimer.

The catalysed reaction is orotidine 5'-phosphate + H(+) = UMP + CO2. Its pathway is pyrimidine metabolism; UMP biosynthesis via de novo pathway; UMP from orotate: step 2/2. Its function is as follows. Catalyzes the decarboxylation of orotidine 5'-monophosphate (OMP) to uridine 5'-monophosphate (UMP). In Thermococcus kodakarensis (strain ATCC BAA-918 / JCM 12380 / KOD1) (Pyrococcus kodakaraensis (strain KOD1)), this protein is Orotidine 5'-phosphate decarboxylase.